The following is a 580-amino-acid chain: Serine/threonine-protein kinase PINK1, mitochondrial (580 aa).

The transit peptide at 1–77 (MAVRQALGRG…RFFRQSVAGL (77 aa)) directs the protein to the mitochondrion. Residues 28–60 (VSGWGKPGPGAAWGRGERPGRVSSPGAQPRPLG) form a disordered region. Residues 94–110 (GPCGRAVFLAFGLGLGL) traverse the membrane as a helical segment. Residues 111–117 (IEEKQAE) form a required for outer membrane localization region. Residues 156–510 (YLIGQAIGKG…IAANVLHLSL (355 aa)) enclose the Protein kinase domain. Residues 162 to 170 (IGKGCNAAV) and lysine 218 each bind ATP. The residue at position 227 (serine 227) is a Phosphoserine; by autocatalysis. Aspartate 361 acts as the Proton acceptor in catalysis. Serine 401 is modified (phosphoserine; by autocatalysis).

The protein belongs to the protein kinase superfamily. Ser/Thr protein kinase family. In terms of assembly, upon mitochondrial depolarization, it forms a supercomplex with TOM and TIM23 complexes. PINK1-TOM-TIM23 supercomplex formation requires PINK1 interaction with TOMM20 and TOMM70 and is critical for PINK1 stabilization at the outer mitochondrial membrane, kinase activation and downstream mitophagy. Upon mitochondrial depolarization, interacts with TIMM23; the interaction is required for PINK1 accumulation at the outer mitochondrial membrane, kinase activation by autophosphorylation and PRKN recruitement to mitochondria. Interacts with PRKN. Interacts with FBXO7. Forms a complex with PRKN and PARK7. Interacts with NENF. It depends on Mg(2+) as a cofactor. Post-translationally, proteolytically cleaved. In healthy cells, the precursor is continuously imported into the inner mitochondrial membrane (IMM), where it is proteolytically cleaved by mitochondrial-processing peptidase (MPP) and then undergoes further proteolytic cleavage by PARL or AFG3L2 to give rise to the 52 kDa short form. The 52 kDa short form is then released into the cytosol where it rapidly undergoes proteasome-dependent degradation. In unhealthy cells, when cellular stress conditions lead to the loss of mitochondrial membrane potential, mitochondrial import is impaired leading to the precursor accumulating on the outer mitochondrial membrane (OMM). If accumulation at the OMM fails and it is imported into the depolarized mitochondria, it undergoes cleavage by the IMM protease OMA1, promoting its subsequent degradation by the proteasome. Autophosphorylated. Loss of mitochondrial membrane potential results in the precursor accumulating on the outer mitochondrial membrane (OMM) where it is activated by autophosphorylation. Autophosphorylation at Ser-227 and Ser-401 is sufficient and essential for selective recruitment of PRKN to depolarized mitochondria, via PINK1-dependent phosphorylation of ubiquitin and maybe PRKN.

The protein resides in the mitochondrion outer membrane. The protein localises to the mitochondrion inner membrane. It localises to the cytoplasm. It is found in the cytosol. The enzyme catalyses L-seryl-[protein] + ATP = O-phospho-L-seryl-[protein] + ADP + H(+). It catalyses the reaction L-threonyl-[protein] + ATP = O-phospho-L-threonyl-[protein] + ADP + H(+). In terms of biological role, serine/threonine-protein kinase which acts as a sensor of mitochondrial damage and protects against mitochondrial dysfunction during cellular stress. It phosphorylates mitochondrial proteins to coordinate mitochondrial quality control mechanisms that remove and replace dysfunctional mitochondrial components. Depending on the severity of mitochondrial damage, activity ranges from preventing apoptosis and stimulating mitochondrial biogenesis to eliminating severely damaged mitochondria via PINK1-PRKN-dependent mitophagy. When cellular stress results in irreversible mitochondrial damage, PINK1 accumulates at the outer mitochondrial membrane (OMM) where it phosphorylates pre-existing polyubiquitin chains at 'Ser-65', recruits PRKN from the cytosol to the OMM and activates PRKN by phosphorylation at 'Ser-65'; activated PRKN then ubiquinates VDAC1 and other OMM proteins to initiate mitophagy. The PINK1-PRKN pathway also promotes fission of damaged mitochondria through phosphorylation and PRKN-dependent degradation of mitochondrial proteins involved in fission such as MFN2. This prevents the refusion of unhealthy mitochondria with the mitochondrial network or initiates mitochondrial fragmentation facilitating their later engulfment by autophagosomes. Also promotes mitochondrial fission independently of PRKN and ATG7-mediated mitophagy, via the phosphorylation and activation of DNM1L. Regulates motility of damaged mitochondria by promoting the ubiquitination and subsequent degradation of MIRO1 and MIRO2; in motor neurons, this likely inhibits mitochondrial intracellular anterograde transport along the axons which probably increases the chance of the mitochondria undergoing mitophagy in the soma. Required for ubiquinone reduction by mitochondrial complex I by mediating phosphorylation of complex I subunit NDUFA10. Phosphorylates LETM1, positively regulating its mitochondrial calcium transport activity. In Rattus norvegicus (Rat), this protein is Serine/threonine-protein kinase PINK1, mitochondrial.